The chain runs to 197 residues: uncharacterized protein (197 aa).

This sequence belongs to the methyltransferase superfamily.

This is an uncharacterized protein from Mycobacterium bovis (strain ATCC BAA-935 / AF2122/97).